Reading from the N-terminus, the 212-residue chain is MLTPYGYPTILKTACIAILLSGAAHLFAKPLLPEALIFSVFLLLFTLYFFRDPIRTPPDKKRTVLAPADGKVLLVKPVNNHFTGPSSTLVSIFMSPFNVHVNRIPVDGTVTLLSYHQGTFMMAFDHRSLESNEKMEIGIENKELKLHFSQVSGFLARRIICSLQQGEQVERGKRFGMIRFGSRVDVIVPAHVEVTVKAGQHTKAGETVIARF.

The active-site Schiff-base intermediate with substrate; via pyruvic acid is serine 182. Position 182 is a pyruvic acid (Ser); by autocatalysis (serine 182).

The protein belongs to the phosphatidylserine decarboxylase family. PSD-A subfamily. In terms of assembly, heterodimer of a large membrane-associated beta subunit and a small pyruvoyl-containing alpha subunit. Pyruvate is required as a cofactor. In terms of processing, is synthesized initially as an inactive proenzyme. Formation of the active enzyme involves a self-maturation process in which the active site pyruvoyl group is generated from an internal serine residue via an autocatalytic post-translational modification. Two non-identical subunits are generated from the proenzyme in this reaction, and the pyruvate is formed at the N-terminus of the alpha chain, which is derived from the carboxyl end of the proenzyme. The post-translation cleavage follows an unusual pathway, termed non-hydrolytic serinolysis, in which the side chain hydroxyl group of the serine supplies its oxygen atom to form the C-terminus of the beta chain, while the remainder of the serine residue undergoes an oxidative deamination to produce ammonia and the pyruvoyl prosthetic group on the alpha chain.

Its subcellular location is the cell membrane. It carries out the reaction a 1,2-diacyl-sn-glycero-3-phospho-L-serine + H(+) = a 1,2-diacyl-sn-glycero-3-phosphoethanolamine + CO2. It functions in the pathway phospholipid metabolism; phosphatidylethanolamine biosynthesis; phosphatidylethanolamine from CDP-diacylglycerol: step 2/2. In terms of biological role, catalyzes the formation of phosphatidylethanolamine (PtdEtn) from phosphatidylserine (PtdSer). This is Phosphatidylserine decarboxylase proenzyme from Chlorobium limicola (strain DSM 245 / NBRC 103803 / 6330).